The primary structure comprises 88 residues: YcgL domain-containing protein HI_1446 (88 aa).

One can recognise a YcgL domain in the interval 1 to 85; the sequence is MLCAIYKSKK…QDDGLFNSLS (85 aa).

The chain is YcgL domain-containing protein HI_1446 from Haemophilus influenzae (strain ATCC 51907 / DSM 11121 / KW20 / Rd).